The chain runs to 370 residues: Cobalt-precorrin-5B C(1)-methyltransferase (370 aa).

It belongs to the CbiD family.

The catalysed reaction is Co-precorrin-5B + S-adenosyl-L-methionine = Co-precorrin-6A + S-adenosyl-L-homocysteine. It functions in the pathway cofactor biosynthesis; adenosylcobalamin biosynthesis; cob(II)yrinate a,c-diamide from sirohydrochlorin (anaerobic route): step 6/10. Its function is as follows. Catalyzes the methylation of C-1 in cobalt-precorrin-5B to form cobalt-precorrin-6A. This Pseudomonas syringae pv. tomato (strain ATCC BAA-871 / DC3000) protein is Cobalt-precorrin-5B C(1)-methyltransferase.